The following is a 314-amino-acid chain: Methenyltetrahydromethanopterin cyclohydrolase (314 aa).

The protein belongs to the MCH family.

The protein resides in the cytoplasm. The enzyme catalyses 5,10-methenyl-5,6,7,8-tetrahydromethanopterin + H2O = N(5)-formyl-5,6,7,8-tetrahydromethanopterin + H(+). It participates in one-carbon metabolism; methanogenesis from CO(2); 5,10-methenyl-5,6,7,8-tetrahydromethanopterin from CO(2): step 3/3. Functionally, catalyzes the reversible interconversion of 5-formyl-H(4)MPT to methenyl-H(4)MPT(+). The sequence is that of Methenyltetrahydromethanopterin cyclohydrolase from Methanocorpusculum labreanum (strain ATCC 43576 / DSM 4855 / Z).